Consider the following 269-residue polypeptide: Phosphate import ATP-binding protein PstB (269 aa).

Residues 22–264 (IKVKNVDFFY…PANKKTEDYI (243 aa)) enclose the ABC transporter domain. Residue 55 to 62 (GSSGSGKS) participates in ATP binding.

This sequence belongs to the ABC transporter superfamily. Phosphate importer (TC 3.A.1.7) family. In terms of assembly, the complex is composed of two ATP-binding proteins (PstB), two transmembrane proteins (PstC and PstA) and a solute-binding protein (PstS).

The protein localises to the cell membrane. The catalysed reaction is phosphate(out) + ATP + H2O = ADP + 2 phosphate(in) + H(+). Functionally, part of the ABC transporter complex PstSACB involved in phosphate import. Responsible for energy coupling to the transport system. This chain is Phosphate import ATP-binding protein PstB, found in Spiroplasma kunkelii.